We begin with the raw amino-acid sequence, 146 residues long: Hemoglobin subunit beta (146 aa).

The Globin domain maps to 2–146 (HWTAEEKQLI…VAHALARKYH (145 aa)). Residues His63 and His92 each coordinate heme b.

It belongs to the globin family. Heterotetramer of two alpha chains and two beta chains. As to expression, red blood cells.

Its function is as follows. Involved in oxygen transport from the lung to the various peripheral tissues. In Branta canadensis (Canada goose), this protein is Hemoglobin subunit beta (HBB).